We begin with the raw amino-acid sequence, 527 residues long: Putative BTB/POZ domain and WD-repeat protein R783 (527 aa).

The region spanning 45–115 (TDVTIVLDDG…FYSQNTDTRN (71 aa)) is the BTB domain. WD repeat units lie at residues 215-266 (IHGD…VEAS), 272-310 (NVKT…LIKT), 313-353 (KHKN…IVRC), 355-391 (ISPV…FLFK), and 436-476 (YCPS…DNKY).

This sequence belongs to the mimivirus BTB/WD family.

The polypeptide is Putative BTB/POZ domain and WD-repeat protein R783 (Acanthamoeba polyphaga (Amoeba)).